Here is a 372-residue protein sequence, read N- to C-terminus: Protein phosphatase Mn(2+)-dependent 1K (372 aa).

Residues 1 to 29 (MLSAAFITLLRSGGNQVKKRVLLSSILLQ) constitute a mitochondrion transit peptide. Residues 46–61 (RCSRFDPDGSGQPATW) are critical for association with the BCKDH complex. The PPM-type phosphatase domain occupies 94-346 (NVGCASLIGK…DNSTAVVVPF (253 aa)). Mn(2+) contacts are provided by Asp127 and Gly128. Ser248 bears the Phosphoserine mark. Residues Asp298 and Asp337 each contribute to the Mn(2+) site.

The protein belongs to the PP2C family. Monomer. Interacts with E1 and E2 components of the branched-chain alpha-ketoacid dehydrogenase (BCKDH) complex; this interaction requires colocalization in mitochondria. Interacts with BCKDHA but not with BCKDHB of the E1 component. Interacts with the 24-meric E2 core composed of DBT monomers with a 24:1 stoichiometry; the N-terminal region (residues 49-61) of PPM1K and C-terminal linker of the lipoyl domain of DBT (residues 145-160) are critical for this interaction, whereas the lipoyl prosthetic group is dispensable. Competes with BCKDK for binding to the E2 core; this interaction is modulated by branched-chain alpha-keto acids. At steady state, BCKDH holoenzyme preferentially binds BCKDK and BCKDHA is phosphorylated. In response to high levels of branched-chain alpha-keto acids, the inhibitory BCKDK is replaced by activating PPM1K leading to BCKDHA dephosphorylation and BCAA degradation. Requires Mn(2+) as cofactor. In terms of tissue distribution, highly expressed in the heart, kidney, brain and liver and to a lesser extent in testis, lung, spleen and adipose tissue. Very low amount in muscle (at protein level). Also expressed in the thymus (at protein level) and the diaphragm. Significantly reduced in hypertrophied hearts.

It is found in the mitochondrion matrix. It carries out the reaction O-phospho-L-seryl-[3-methyl-2-oxobutanoate dehydrogenase] + H2O = L-seryl-[3-methyl-2-oxobutanoate dehydrogenase] + phosphate. The catalysed reaction is O-phospho-L-seryl-[protein] + H2O = L-seryl-[protein] + phosphate. Its pathway is protein modification. Serine/threonine-protein phosphatase component of macronutrients metabolism. Forms a functional kinase and phosphatase pair with BCKDK, serving as a metabolic regulatory node that coordinates branched-chain amino acids (BCAAs) with glucose and lipid metabolism via two distinct phosphoprotein targets: mitochondrial BCKDHA subunit of the branched-chain alpha-ketoacid dehydrogenase (BCKDH) complex and cytosolic ACLY, a lipogenic enzyme of Krebs cycle. At high levels of branched-chain ketoacids, dephosphorylates and activates mitochondrial BCKDH complex, a multisubunit complex consisting of three multimeric components each involved in different steps of BCAA catabolism: E1 composed of BCKDHA and BCKDHB, E2 core composed of DBT monomers, and E3 composed of DLD monomers. Tightly associates with the E2 component of BCKDH complex and dephosphorylates BCKDHA on Ser-334. Regulates the reversible phosphorylation of ACLY in response to changes in cellular carbohydrate abundance such as occurs during fasting to feeding metabolic transition. At fasting state, appears to dephosphorylate ACLY on Ser-455 and inactivate it. Refeeding stimulates MLXIPL/ChREBP transcription factor, leading to increased BCKDK to PPM1K expression ratio, phosphorylation and activation of ACLY that ultimately results in the generation of malonyl-CoA and oxaloacetate immediate substrates of de novo lipogenesis and gluconeogenesis, respectively. Recognizes phosphosites having SxS or RxxS motifs and strictly depends on Mn(2+) ions for the phosphatase activity. Regulates Ca(2+)-induced opening of mitochondrial transition pore and apoptotic cell death. This is Protein phosphatase Mn(2+)-dependent 1K from Mus musculus (Mouse).